A 266-amino-acid polypeptide reads, in one-letter code: Anamorsin homolog (266 aa).

The tract at residues 1 to 164 is N-terminal SAM-like domain; sequence MIINFVGNTL…NITAENPDFL (164 aa). Positions 165–185 are linker; that stretch reads SNEDNDVSSDDEDLYNNEDDK. The [4Fe-4S] cluster site is built by Cys229, Cys232, Cys240, and Cys243. 2 consecutive short sequence motifs (cx2C motif) follow at residues 229–232 and 240–243; these read CGNC and CASC. Positions 229–243 are fe-S binding site B; that stretch reads CGNCYLGDAFRCASC.

It belongs to the anamorsin family. Monomer. It depends on [4Fe-4S] cluster as a cofactor.

It is found in the cytoplasm. Its subcellular location is the mitochondrion intermembrane space. Functionally, component of the cytosolic iron-sulfur (Fe-S) protein assembly (CIA) machinery. Required for the maturation of extramitochondrial Fe-S proteins. Part of an electron transfer chain functioning in an early step of cytosolic Fe-S biogenesis, facilitating the de novo assembly of a [4Fe-4S] cluster on the cytosolic Fe-S scaffold complex. Electrons are transferred from NADPH via a FAD- and FMN-containing diflavin oxidoreductase. Together with the diflavin oxidoreductase, also required for the assembly of the diferric tyrosyl radical cofactor of ribonucleotide reductase (RNR), probably by providing electrons for reduction during radical cofactor maturation in the catalytic small subunit. This is Anamorsin homolog from Plasmodium falciparum (isolate 3D7).